We begin with the raw amino-acid sequence, 301 residues long: tRNA dimethylallyltransferase 1 (301 aa).

Position 10-17 (10-17 (GPTASGKT)) interacts with ATP. 12 to 17 (TASGKT) contributes to the substrate binding site. An interaction with substrate tRNA region spans residues 35–38 (DSRQ).

It belongs to the IPP transferase family. In terms of assembly, monomer. Mg(2+) is required as a cofactor.

It carries out the reaction adenosine(37) in tRNA + dimethylallyl diphosphate = N(6)-dimethylallyladenosine(37) in tRNA + diphosphate. In terms of biological role, catalyzes the transfer of a dimethylallyl group onto the adenine at position 37 in tRNAs that read codons beginning with uridine, leading to the formation of N6-(dimethylallyl)adenosine (i(6)A). The sequence is that of tRNA dimethylallyltransferase 1 from Geotalea uraniireducens (strain Rf4) (Geobacter uraniireducens).